Reading from the N-terminus, the 1035-residue chain is Protein hir-1 (1035 aa).

WD repeat units follow at residues 15–54, 68–107, 129–168, 171–210, 232–275, 299–338, and 342–383; these read QKDF…NSHD, HHLG…PSHT, GHDN…KLKT, VHQS…PNAT, PLTT…SEIN, DENS…PVLI, and IASK…WVAK. Residues 393–479 form a disordered region; the sequence is KYGGSRKGMG…PEEESADKTA (87 aa). A compositionally biased stretch (basic and acidic residues) spans 408-425; the sequence is DGLHLENHSKEKELRGAE.

This sequence belongs to the WD repeat HIR1 family.

Its subcellular location is the nucleus. Functionally, required for replication-independent chromatin assembly and for the periodic repression of histone gene transcription during the cell cycle. The sequence is that of Protein hir-1 (hir-1) from Neurospora crassa (strain ATCC 24698 / 74-OR23-1A / CBS 708.71 / DSM 1257 / FGSC 987).